The following is a 163-amino-acid chain: Protein-export protein SecB (163 aa).

It belongs to the SecB family. In terms of assembly, homotetramer, a dimer of dimers. One homotetramer interacts with 1 SecA dimer.

The protein resides in the cytoplasm. Functionally, one of the proteins required for the normal export of preproteins out of the cell cytoplasm. It is a molecular chaperone that binds to a subset of precursor proteins, maintaining them in a translocation-competent state. It also specifically binds to its receptor SecA. The chain is Protein-export protein SecB from Burkholderia ambifaria (strain MC40-6).